A 614-amino-acid polypeptide reads, in one-letter code: Protein YehQ (614 aa).

SWIM-type zinc fingers lie at residues 55-89 and 151-185; these read VRTQ…LSYQ and SDVR…QAFV.

The protein is Protein YehQ (yehQ) of Escherichia coli (strain K12).